We begin with the raw amino-acid sequence, 327 residues long: Dolichyl-phosphate beta-glucosyltransferase ALG5D (327 aa).

The Lumenal segment spans residues 1–6; that stretch reads MEKQLA. A helical membrane pass occupies residues 7–27; the sequence is ELSVYILIIFLILGFIMAILM. At 28 to 327 the chain is on the cytoplasmic side; it reads RFGDDTTLFD…NIWTIRDRKF (300 aa).

The protein belongs to the glycosyltransferase 2 family.

The protein localises to the endoplasmic reticulum membrane. The catalysed reaction is a di-trans,poly-cis-dolichyl phosphate + UDP-alpha-D-glucose = a di-trans,poly-cis-dolichyl beta-D-glucosyl phosphate + UDP. The protein operates within protein modification; protein glycosylation. Dolichyl-phosphate beta-glucosyltransferase involved in the glycosylation of glycoproteins through the synthesis of dolichyl beta-D-glucosyl phosphate which serves as a sugar donor for transfer of three glucose residues to the Man-9-GlcNAc-2-PP-dolichol precursor to N-glycans. This is Dolichyl-phosphate beta-glucosyltransferase ALG5D from Trichomonas vaginalis (strain ATCC PRA-98 / G3).